The chain runs to 261 residues: Glucosamine-6-phosphate deaminase (261 aa).

Catalysis depends on Asp-67, which acts as the Proton acceptor; for enolization step. Catalysis depends on Asn-136, which acts as the For ring-opening step. His-138 acts as the Proton acceptor; for ring-opening step in catalysis. The active-site For ring-opening step is Glu-143.

The protein belongs to the glucosamine/galactosamine-6-phosphate isomerase family. NagB subfamily.

The enzyme catalyses alpha-D-glucosamine 6-phosphate + H2O = beta-D-fructose 6-phosphate + NH4(+). Its pathway is amino-sugar metabolism; N-acetylneuraminate degradation; D-fructose 6-phosphate from N-acetylneuraminate: step 5/5. Its function is as follows. Catalyzes the reversible isomerization-deamination of glucosamine 6-phosphate (GlcN6P) to form fructose 6-phosphate (Fru6P) and ammonium ion. The polypeptide is Glucosamine-6-phosphate deaminase (Cutibacterium acnes (strain DSM 16379 / KPA171202) (Propionibacterium acnes)).